A 267-amino-acid chain; its full sequence is L-aspartate dehydrogenase (267 aa).

Residues Ala-124 and Asn-190 each contribute to the NAD(+) site. The active site involves His-218.

It belongs to the L-aspartate dehydrogenase family.

It carries out the reaction L-aspartate + NADP(+) + H2O = oxaloacetate + NH4(+) + NADPH + H(+). The catalysed reaction is L-aspartate + NAD(+) + H2O = oxaloacetate + NH4(+) + NADH + H(+). It functions in the pathway cofactor biosynthesis; NAD(+) biosynthesis; iminoaspartate from L-aspartate (dehydrogenase route): step 1/1. Specifically catalyzes the NAD or NADP-dependent dehydrogenation of L-aspartate to iminoaspartate. The chain is L-aspartate dehydrogenase from Methanococcus maripaludis (strain DSM 14266 / JCM 13030 / NBRC 101832 / S2 / LL).